The primary structure comprises 462 residues: MILNLIILLAISIVASASNIAAYWGQNAGGDQQTLGDYCSSSPASIIILSFLDGFPNLSLNFANQCSGTFSSGLAHCSQIGSDIKSCQQQGKTILLSLGGATGNYGFSSDSEAVQFAGTLWNKFGGGKDSERPFDDAIVDGFDFDIENKDQTGYAALATQLRKYFSTGTKSYYLSAAPQCPYPDESVGDLMSQVDLDFAFIQFYNNYCSLNQQFNWNSWSNYARGKSIKLYLGLPGSSSSAGSGFVGLSTVQRVVASIKGDSSFGGISIWDISSAENGGYLNQLHQALSGSGSPAAPSNSYQPNTPLTRTYGGSTATASAYISVGFTAGATHGSTTTNDLLAWIDSLFGSSQSSVQQYATPVQSVTATPQPVAATTTSAPKPTASAFNWFGWFDGTTTSTTLQTVYSTVPADQTVYVTLTTTVGSQMLQSLFDKRDVIAEAKSTNLQICWLLFIPLLALICS.

Residues 1-17 form the signal peptide; sequence MILNLIILLAISIVASA. The GH18 domain maps to 18–291; that stretch reads SNIAAYWGQN…NQLHQALSGS (274 aa). The N-linked (GlcNAc...) asparagine glycan is linked to asparagine 57. Residue glutamate 147 is the Proton donor of the active site.

It belongs to the glycosyl hydrolase 18 family. Chitinase class V subfamily.

It is found in the secreted. It carries out the reaction Random endo-hydrolysis of N-acetyl-beta-D-glucosaminide (1-&gt;4)-beta-linkages in chitin and chitodextrins.. In terms of biological role, chitinase involved in the remodeling of chitin in the fungal cell wall. Plays a role in cell separation. This Candida albicans (strain SC5314 / ATCC MYA-2876) (Yeast) protein is Chitinase 1 (CHT1).